The chain runs to 408 residues: UPF0754 membrane protein Tery_3973 (408 aa).

2 helical membrane passes run Ile4–Ile24 and Ile385–Val405.

The protein belongs to the UPF0754 family.

The protein resides in the cell inner membrane. In Trichodesmium erythraeum (strain IMS101), this protein is UPF0754 membrane protein Tery_3973.